A 122-amino-acid chain; its full sequence is Large ribosomal subunit protein uL14 (122 aa).

It belongs to the universal ribosomal protein uL14 family. Part of the 50S ribosomal subunit. Forms a cluster with proteins L3 and L19. In the 70S ribosome, L14 and L19 interact and together make contacts with the 16S rRNA in bridges B5 and B8.

Functionally, binds to 23S rRNA. Forms part of two intersubunit bridges in the 70S ribosome. This is Large ribosomal subunit protein uL14 from Janthinobacterium sp. (strain Marseille) (Minibacterium massiliensis).